Reading from the N-terminus, the 101-residue chain is Small ribosomal subunit protein uS14 (101 aa).

Belongs to the universal ribosomal protein uS14 family. In terms of assembly, part of the 30S ribosomal subunit. Contacts proteins S3 and S10.

In terms of biological role, binds 16S rRNA, required for the assembly of 30S particles and may also be responsible for determining the conformation of the 16S rRNA at the A site. This is Small ribosomal subunit protein uS14 from Zymomonas mobilis subsp. mobilis (strain ATCC 31821 / ZM4 / CP4).